The following is a 216-amino-acid chain: Ribonuclease HII (216 aa).

The RNase H type-2 domain maps to 27–216 (ASLAGVDEAG…VKEHVKNCEG (190 aa)). A divalent metal cation-binding residues include D33, E34, and D125.

This sequence belongs to the RNase HII family. Requires Mn(2+) as cofactor. It depends on Mg(2+) as a cofactor.

It localises to the cytoplasm. The catalysed reaction is Endonucleolytic cleavage to 5'-phosphomonoester.. Endonuclease that specifically degrades the RNA of RNA-DNA hybrids. The chain is Ribonuclease HII from Geotalea daltonii (strain DSM 22248 / JCM 15807 / FRC-32) (Geobacter daltonii).